A 431-amino-acid chain; its full sequence is Serine hydroxymethyltransferase 2 (431 aa).

(6S)-5,6,7,8-tetrahydrofolate-binding positions include leucine 131 and 135–137 (GHL). Lysine 240 carries the N6-(pyridoxal phosphate)lysine modification.

Belongs to the SHMT family. In terms of assembly, homodimer. Pyridoxal 5'-phosphate is required as a cofactor.

It is found in the cytoplasm. It catalyses the reaction (6R)-5,10-methylene-5,6,7,8-tetrahydrofolate + glycine + H2O = (6S)-5,6,7,8-tetrahydrofolate + L-serine. Its pathway is one-carbon metabolism; tetrahydrofolate interconversion. The protein operates within amino-acid biosynthesis; glycine biosynthesis; glycine from L-serine: step 1/1. Functionally, catalyzes the reversible interconversion of serine and glycine with tetrahydrofolate (THF) serving as the one-carbon carrier. This reaction serves as the major source of one-carbon groups required for the biosynthesis of purines, thymidylate, methionine, and other important biomolecules. Also exhibits THF-independent aldolase activity toward beta-hydroxyamino acids, producing glycine and aldehydes, via a retro-aldol mechanism. The polypeptide is Serine hydroxymethyltransferase 2 (Photobacterium profundum (strain SS9)).